Consider the following 297-residue polypeptide: MRDNIIIITGITASGKSELCDNLIKKYGNISIVNCDSKQVYKEIPIITAQPPKQEEFYRLYGCVPAKENYSVGLWLEDLKGEVDHALENARMPIITGGSGLYISSLINSLSPIPKVSEEIRKNVSELRKNLSKEEFYKLVLSKDSKIQGKISTNDLHRLSRALEVITATGKSIFVWQESRQLPLFDNFKIYTILPKREDVYRKINSRFVTMIESGAVDEVKKLLNMNLAPHLPAMRAHGVPEIIKYLKGKITLSEAIQIAQTNTRHYAKRQYTWFKNQFPNSEVIDCANKLIEFEIF.

10–17 provides a ligand contact to ATP; sequence GITASGKS. 12–17 is a substrate binding site; sequence TASGKS. Residues 36-39 form an interaction with substrate tRNA region; the sequence is DSKQ.

Belongs to the IPP transferase family. In terms of assembly, monomer. Requires Mg(2+) as cofactor.

It catalyses the reaction adenosine(37) in tRNA + dimethylallyl diphosphate = N(6)-dimethylallyladenosine(37) in tRNA + diphosphate. Its function is as follows. Catalyzes the transfer of a dimethylallyl group onto the adenine at position 37 in tRNAs that read codons beginning with uridine, leading to the formation of N6-(dimethylallyl)adenosine (i(6)A). This Wolbachia sp. subsp. Brugia malayi (strain TRS) protein is tRNA dimethylallyltransferase.